The primary structure comprises 416 residues: MGSAGVASSSSDVAISALREKHEKEVENLTLTTQPLNTLKLFVEATIQYIKRSISYLLAHGGWFILITTLLVVSGGLLVTVDGPHGKHVEEVLEYVRYGLWWIALGVASSIGLGSGLHTFVLYLGPHIALFTLKATLCGRVDLKSAPYDTIQLKRVPSWLDKSCSEFGPPLMISAAGSRVPLTSILPQVQLEAILWGIGTALGELPPYFISRAASISGSTVDGMEELDGSSTEDSGFMATHLNRVKRWLLTHSQHLNFFTVLVLASVPNPLFDLAGIMCGQFGIPFWEFFLATLIGKAIIKTHIQTIFIICVCNNQLLDWMENELIWILSHVPGLASMLPGLTAKLHAMKEKYIDAPSPVPSHIKVKKWDFSFASIWNGIVWLMLLNFFVKIVTATAQRHLKKKQEKEMATLTHSD.

At G2 the chain carries N-acetylglycine. At 2–60 the chain is on the cytoplasmic side; that stretch reads GSAGVASSSSDVAISALREKHEKEVENLTLTTQPLNTLKLFVEATIQYIKRSISYLLAH. The helical transmembrane segment at 61 to 81 threads the bilayer; sequence GGWFILITTLLVVSGGLLVTV. Over 82-101 the chain is Lumenal; the sequence is DGPHGKHVEEVLEYVRYGLW. The helical transmembrane segment at 102–124 threads the bilayer; it reads WIALGVASSIGLGSGLHTFVLYL. Residues 125–257 are Cytoplasmic-facing; it reads GPHIALFTLK…WLLTHSQHLN (133 aa). A helical membrane pass occupies residues 258-278; sequence FFTVLVLASVPNPLFDLAGIM. Over 279 to 289 the chain is Lumenal; it reads CGQFGIPFWEF. The chain crosses the membrane as a helical span at residues 290–312; sequence FLATLIGKAIIKTHIQTIFIICV. The Cytoplasmic segment spans residues 313–323; sequence CNNQLLDWMEN. A helical membrane pass occupies residues 324 to 344; the sequence is ELIWILSHVPGLASMLPGLTA. The Lumenal portion of the chain corresponds to 345–372; the sequence is KLHAMKEKYIDAPSPVPSHIKVKKWDFS. A helical transmembrane segment spans residues 373–393; that stretch reads FASIWNGIVWLMLLNFFVKIV. At 394–416 the chain is on the cytoplasmic side; sequence TATAQRHLKKKQEKEMATLTHSD.

Belongs to the VMP1 family.

The protein localises to the endoplasmic reticulum membrane. Functionally, involved in the early secretory pathway. Required for the correct export of secretory products from the endoplasmic reticulum (ER) and involved in the maintenance of ER integrity. This is Vacuole membrane protein KMS1 from Arabidopsis thaliana (Mouse-ear cress).